Here is a 337-residue protein sequence, read N- to C-terminus: Dolichyl-phosphate beta-glucosyltransferase ALG5C (337 aa).

The Lumenal segment spans residues 1-6 (MNDLPP). A helical membrane pass occupies residues 7 to 27 (IANLISNILFVLLIITFLYAL). Residues 28-337 (CSRFVSDKTL…ADTPISDFEV (310 aa)) lie on the Cytoplasmic side of the membrane.

The protein belongs to the glycosyltransferase 2 family.

It localises to the endoplasmic reticulum membrane. It carries out the reaction a di-trans,poly-cis-dolichyl phosphate + UDP-alpha-D-glucose = a di-trans,poly-cis-dolichyl beta-D-glucosyl phosphate + UDP. It functions in the pathway protein modification; protein glycosylation. In terms of biological role, dolichyl-phosphate beta-glucosyltransferase involved in the glycosylation of glycoproteins through the synthesis of dolichyl beta-D-glucosyl phosphate which serves as a sugar donor for transfer of three glucose residues to the Man-9-GlcNAc-2-PP-dolichol precursor to N-glycans. This chain is Dolichyl-phosphate beta-glucosyltransferase ALG5C, found in Trichomonas vaginalis (strain ATCC PRA-98 / G3).